We begin with the raw amino-acid sequence, 668 residues long: Phosphatidylinositol 4-phosphate 5-kinase type-1 gamma (668 aa).

The segment at 45 to 67 (SMTAQPGPGHGKKLGHRGVDASG) is disordered. Residues 75–443 (TSSTLKGAIQ…RFFKFMSNTV (369 aa)) form the PIPK domain. N6-acetyllysine occurs at positions 265 and 268. Arg-459 carries the post-translational modification Asymmetric dimethylarginine; alternate. Position 459 is an omega-N-methylarginine; alternate (Arg-459). Low complexity predominate over residues 526–535 (TTLSSTSLSI). 2 disordered regions span residues 526–578 (TTLS…ITVQ) and 593–642 (EDAG…YFPT). Ser-555 is modified (phosphoserine). Residue Tyr-639 is modified to Phosphotyrosine; by EGFR. Residues 641–668 (PTDERSWVYSPLHYSAQAPPASDGESDT) form a mediates interaction with TLN2 region. Tyr-649 carries the phosphotyrosine; by CSK modification. At Ser-650 the chain carries Phosphoserine; by CDK5, MAPK1 and CDK1. Ser-662 and Ser-666 each carry phosphoserine. Residue Thr-668 is modified to Phosphothreonine.

Interacts with TLN1. Interacts with TLN2; interaction stimulates 1-phosphatidylinositol-4-phosphate 5-kinase activity. May compete with beta-integrins for the same binding site on TLN1 and TLN2. Interacts with ARF6; interaction stimulates 1-phosphatidylinositol-4-phosphate 5-kinase activity. Interacts with AP2B1. Interacts with AP2M1; phosphorylation of PIP5K1C by CSK disrupts the interaction; clathrin competes with PIP5K1C. Interacts with CDH1. Interacts with CSK. Interacts with PLCG1; interaction is abolished upon EGF stimulation. Interacts with LAPTM4B; promotes SNX5 association with LAPTM4B; kinase activity of PIP5K1C is required; interaction is regulated by phosphatidylinositol 4,5-bisphosphate generated by PIP5K1C. In terms of processing, phosphorylation on Ser-650 negatively regulates binding to TLN2 and is strongly stimulated in mitosis. Phosphorylation on Tyr-649 is necessary for targeting to focal adhesions. Phosphorylation on Ser-650 and Tyr-649 are mutually exclusive. Phosphorylated by SYK and CSK. Tyrosine phosphorylation is enhanced by PTK2 signaling. Phosphorylated at Tyr-639 upon EGF stimulation. Some studies suggest that phosphorylation on Tyr-649 enhances binding to tailins (TLN1 and TLN2). According to PubMed:15738269 phosphorylation at Tyr-649 does not directly enhance binding to tailins (TLN1 and TLN2) but may act indirectly by inhibiting phosphorylation at Ser-650. Post-translationally, acetylation at Lys-265 and Lys-268 seems to decrease lipid 1-phosphatidylinositol-4-phosphate 5-kinase activity. Deacetylation of these sites by SIRT1 positively regulates the exocytosis of TSH-containing granules from pituitary cells. As to expression, isoform 1 is strongly expressed in brain and also detected in heart and lung. Isoform 2 is strongly expressed in pancreas and liver and in lesser quantities in brain, heart, lung and kidney. In terms of tissue distribution, isoform 3 is detected in large amounts in heart and large intestine, is also present in lung, pancreas and thyroid, and to a lesser extent in brain, stomach and kidney.

The protein resides in the cell membrane. The protein localises to the endomembrane system. Its subcellular location is the cytoplasm. It is found in the cell junction. It localises to the focal adhesion. The protein resides in the adherens junction. The protein localises to the cell projection. Its subcellular location is the ruffle membrane. It is found in the phagocytic cup. It localises to the uropodium. The protein resides in the nucleus. It carries out the reaction a 1,2-diacyl-sn-glycero-3-phospho-(1D-myo-inositol 4-phosphate) + ATP = a 1,2-diacyl-sn-glycero-3-phospho-(1D-myo-inositol-4,5-bisphosphate) + ADP + H(+). The enzyme catalyses 1-octadecanoyl-2-(5Z,8Z,11Z,14Z)-eicosatetraenoyl-sn-glycero-3-phospho-1D-myo-inositol 4-phosphate + ATP = 1-octadecanoyl-2-(5Z,8Z,11Z,14Z)-eicosatetraenoyl-sn-glycero-3-phospho-1D-myo-inositol 4,5-bisphosphate + ADP + H(+). The catalysed reaction is 1-octadecanoyl-2-(9Z)-octadecenoyl-sn-glycero-3-phospho-1D-myo-inositol 4-phosphate + ATP = 1-octadecanoyl-2-(9Z)-octadecenoyl-sn-glycero-3-phospho-1D-myo-inositol 4,5-bisphosphate + ADP + H(+). It catalyses the reaction 1-octadecanoyl-2-(9Z)-octadecenoyl-sn-glycero-3-phospho-1D-myo-inositol + ATP = 1-octadecanoyl-2-(9Z)-octadecenoyl-sn-glycero-3-phospho-1D-myo-inositol 5-phosphate + ADP + H(+). It carries out the reaction 1-octadecanoyl-2-(9Z,12Z)-octadecadienoyl-sn-glycero-3-phospho-1D-myo-inositol + ATP = 1-octadecanoyl-2-(9Z,12Z)-octadecadienoyl-sn-glycero-3-phospho-1D-myo-inositol 5-phosphate + ADP + H(+). The enzyme catalyses 1-octadecanoyl-2-(5Z,8Z,11Z,14Z-eicosatetraenoyl)-sn-glycero-3-phospho-(1D-myo-inositol) + ATP = 1-octadecanoyl-2-(5Z,8Z,11Z,14Z)-eicosatetraenoyl-sn-glycero-3-phospho-1D-myo-inositol 5-phosphate + ADP + H(+). The catalysed reaction is 1,2-di-(9Z,12Z)-octadecadienoyl-sn-glycero-3-phospho-1D-myo-inositol + ATP = 1,2-di(9Z,12Z)-octadecadienoyl-sn-glycero-3-phospho-1D-myo-inositol 5-phosphate + ADP + H(+). Functionally, catalyzes the phosphorylation of phosphatidylinositol 4-phosphate (PtdIns(4)P/PI4P) to form phosphatidylinositol 4,5-bisphosphate (PtdIns(4,5)P2/PIP2), a lipid second messenger that regulates several cellular processes such as signal transduction, vesicle trafficking, actin cytoskeleton dynamics, cell adhesion, and cell motility. PtdIns(4,5)P2 can directly act as a second messenger or can be utilized as a precursor to generate other second messengers: inositol 1,4,5-trisphosphate (IP3), diacylglycerol (DAG) or phosphatidylinositol-3,4,5-trisphosphate (PtdIns(3,4,5)P3/PIP3). PIP5K1A-mediated phosphorylation of PtdIns(4)P is the predominant pathway for PtdIns(4,5)P2 synthesis. Together with PIP5K1A, is required for phagocytosis, both enzymes regulating different types of actin remodeling at sequential steps. Promotes particle attachment by generating the pool of PtdIns(4,5)P2 that induces controlled actin depolymerization to facilitate Fc-gamma-R clustering. Mediates RAC1-dependent reorganization of actin filaments. Required for synaptic vesicle transport. Controls the plasma membrane pool of PtdIns(4,5)P2 implicated in synaptic vesicle endocytosis and exocytosis. Plays a role in endocytosis mediated by clathrin and AP-2 (adaptor protein complex 2). Required for clathrin-coated pits assembly at the synapse. Participates in cell junction assembly. Modulates adherens junctions formation by facilitating CDH1/cadherin trafficking. Required for focal adhesion dynamics. Modulates the targeting of talins (TLN1 and TLN2) to the plasma membrane and their efficient assembly into focal adhesions. Regulates the interaction between talins (TLN1 and TLN2) and beta-integrins. Required for uropodium formation and retraction of the cell rear during directed migration. Has a role in growth factor-stimulated directional cell migration and adhesion. Required for talin assembly into nascent adhesions forming at the leading edge toward the direction of the growth factor. Negative regulator of T-cell activation and adhesion. Negatively regulates integrin alpha-L/beta-2 (LFA-1) polarization and adhesion induced by T-cell receptor. Together with PIP5K1A has a role during embryogenesis and together with PIP5K1B may have a role immediately after birth. In Homo sapiens (Human), this protein is Phosphatidylinositol 4-phosphate 5-kinase type-1 gamma.